A 455-amino-acid polypeptide reads, in one-letter code: Bifunctional protein GlmU (455 aa).

Positions 1 to 226 (MSLDIVILAA…PMEVQGANDR (226 aa)) are pyrophosphorylase. UDP-N-acetyl-alpha-D-glucosamine-binding positions include 8–11 (LAAG), Lys22, Gln73, 78–79 (GT), 99–101 (YGD), Gly136, Glu151, Asn166, and Asn224. Residue Asp101 participates in Mg(2+) binding. Position 224 (Asn224) interacts with Mg(2+). A linker region spans residues 227–247 (RQLSELERHYQLREGRRLMAQ). The segment at 248 to 455 (GVTLRDPARF…WKRPEKIKKS (208 aa)) is N-acetyltransferase. Residues Arg330 and Lys348 each contribute to the UDP-N-acetyl-alpha-D-glucosamine site. His360 (proton acceptor) is an active-site residue. Residues Tyr363 and Asn374 each contribute to the UDP-N-acetyl-alpha-D-glucosamine site. Acetyl-CoA-binding positions include Ala377, 383–384 (NY), Ser402, Ala420, and Arg437.

The protein in the N-terminal section; belongs to the N-acetylglucosamine-1-phosphate uridyltransferase family. It in the C-terminal section; belongs to the transferase hexapeptide repeat family. As to quaternary structure, homotrimer. The cofactor is Mg(2+).

It is found in the cytoplasm. It catalyses the reaction alpha-D-glucosamine 1-phosphate + acetyl-CoA = N-acetyl-alpha-D-glucosamine 1-phosphate + CoA + H(+). The catalysed reaction is N-acetyl-alpha-D-glucosamine 1-phosphate + UTP + H(+) = UDP-N-acetyl-alpha-D-glucosamine + diphosphate. It functions in the pathway nucleotide-sugar biosynthesis; UDP-N-acetyl-alpha-D-glucosamine biosynthesis; N-acetyl-alpha-D-glucosamine 1-phosphate from alpha-D-glucosamine 6-phosphate (route II): step 2/2. Its pathway is nucleotide-sugar biosynthesis; UDP-N-acetyl-alpha-D-glucosamine biosynthesis; UDP-N-acetyl-alpha-D-glucosamine from N-acetyl-alpha-D-glucosamine 1-phosphate: step 1/1. The protein operates within bacterial outer membrane biogenesis; LPS lipid A biosynthesis. Its function is as follows. Catalyzes the last two sequential reactions in the de novo biosynthetic pathway for UDP-N-acetylglucosamine (UDP-GlcNAc). The C-terminal domain catalyzes the transfer of acetyl group from acetyl coenzyme A to glucosamine-1-phosphate (GlcN-1-P) to produce N-acetylglucosamine-1-phosphate (GlcNAc-1-P), which is converted into UDP-GlcNAc by the transfer of uridine 5-monophosphate (from uridine 5-triphosphate), a reaction catalyzed by the N-terminal domain. In Pseudomonas entomophila (strain L48), this protein is Bifunctional protein GlmU.